A 137-amino-acid chain; its full sequence is ATP synthase epsilon chain (137 aa).

Belongs to the ATPase epsilon chain family. In terms of assembly, F-type ATPases have 2 components, CF(1) - the catalytic core - and CF(0) - the membrane proton channel. CF(1) has five subunits: alpha(3), beta(3), gamma(1), delta(1), epsilon(1). CF(0) has three main subunits: a, b and c.

It localises to the cell membrane. Its function is as follows. Produces ATP from ADP in the presence of a proton gradient across the membrane. This Thermobifida fusca (strain YX) protein is ATP synthase epsilon chain.